We begin with the raw amino-acid sequence, 299 residues long: Fibrinogen silencer-binding protein (299 aa).

Lys-94 participates in a covalent cross-link: Glycyl lysine isopeptide (Lys-Gly) (interchain with G-Cter in SUMO2).

Interacts with APBA1 (via PDZ 1 and 2 domains). In terms of tissue distribution, expressed in multiple tissues including brain.

It is found in the nucleus. Its function is as follows. Transcriptional repressor that down-regulates the expression of the fibrinogen gamma chain. Represses transcription of GSK3B gene promoter via its interaction with APBA1. The protein is Fibrinogen silencer-binding protein (FSBP) of Homo sapiens (Human).